A 524-amino-acid chain; its full sequence is N-acetylgalactosamine-6-sulfatase (524 aa).

Positions 1 to 27 (MTACSTAIRAQQLLLPVLSALGLLAAG) are cleaved as a signal peptide. Positions 28–381 (APQPPNIVLL…PTMLQGHIID (354 aa)) are catalytic domain. Ca(2+) contacts are provided by Asp40, Asp41, and Cys80. The active-site Nucleophile is Cys80. Cys80 is modified (3-oxoalanine (Cys)). The active site involves His143. N-linked (GlcNAc...) asparagine glycosylation is present at Asn205. Positions 290 and 291 each coordinate Ca(2+). Cys310 and Cys421 are joined by a disulfide. An N-linked (GlcNAc...) asparagine glycan is attached at Asn425. 2 disulfides stabilise this stretch: Cys491/Cys520 and Cys503/Cys509.

Belongs to the sulfatase family. Homodimer. The cofactor is Ca(2+). The conversion to 3-oxoalanine (also known as C-formylglycine, FGly), of a serine or cysteine residue in prokaryotes and of a cysteine residue in eukaryotes, is critical for catalytic activity.

It localises to the lysosome. It carries out the reaction Hydrolysis of the 6-sulfate groups of the N-acetyl-D-galactosamine 6-sulfate units of chondroitin sulfate and of the D-galactose 6-sulfate units of keratan sulfate.. The polypeptide is N-acetylgalactosamine-6-sulfatase (Galns) (Rattus norvegicus (Rat)).